Consider the following 706-residue polypeptide: DNA helicase/primase complex-associated protein (706 aa).

The disordered stretch occupies residues 203–249 (CPGGDGGEEGDGAEGGDGGVGGAGDGAGAGGGSSGKPPAGKRGRPTR). A compositionally biased stretch (gly residues) spans 217 to 236 (GGDGGVGGAGDGAGAGGGSS).

This sequence belongs to the herpesviridae HEPA family. As to quaternary structure, associates with the primase and the helicase to form the helicase-primase complex. Interacts with the origin-binding protein. Interacts with the polymerase catalytic subunit.

The protein resides in the host nucleus. Its function is as follows. Component of the helicase/primase complex. Unwinds the DNA at the replication forks and generates single-stranded DNA for both leading and lagging strand synthesis. The primase synthesizes short RNA primers on the lagging strand that the polymerase presumably elongates using dNTPs. The primase-associated factor has no known catalytic activity in the complex and may serve to facilitate the formation of the replisome by directly interacting with the origin-binding protein and the polymerase. The polypeptide is DNA helicase/primase complex-associated protein (40) (Equus caballus (Horse)).